The following is a 461-amino-acid chain: Bifunctional protein GlmU (461 aa).

Residues 1–232 (MNLQIIILAA…SFEVQGINNR (232 aa)) are pyrophosphorylase. UDP-N-acetyl-alpha-D-glucosamine contacts are provided by residues 8 to 11 (LAAG), lysine 22, glutamine 73, and 78 to 79 (GT). A Mg(2+)-binding site is contributed by aspartate 102. Residues glycine 142, glutamate 157, and asparagine 230 each contribute to the UDP-N-acetyl-alpha-D-glucosamine site. Asparagine 230 is a Mg(2+) binding site. The segment at 233 to 253 (QQLQQLERIWQQRAANQLMEK) is linker. The segment at 254–461 (GVTLADANRF…WKRPAKRERD (208 aa)) is N-acetyltransferase. Arginine 336 and lysine 354 together coordinate UDP-N-acetyl-alpha-D-glucosamine. Histidine 366 serves as the catalytic Proton acceptor. The UDP-N-acetyl-alpha-D-glucosamine site is built by tyrosine 369 and asparagine 380. Residues alanine 383, 389–390 (NY), serine 408, and alanine 426 each bind acetyl-CoA.

The protein in the N-terminal section; belongs to the N-acetylglucosamine-1-phosphate uridyltransferase family. In the C-terminal section; belongs to the transferase hexapeptide repeat family. Homotrimer. Requires Mg(2+) as cofactor.

The protein localises to the cytoplasm. It catalyses the reaction alpha-D-glucosamine 1-phosphate + acetyl-CoA = N-acetyl-alpha-D-glucosamine 1-phosphate + CoA + H(+). The enzyme catalyses N-acetyl-alpha-D-glucosamine 1-phosphate + UTP + H(+) = UDP-N-acetyl-alpha-D-glucosamine + diphosphate. It functions in the pathway nucleotide-sugar biosynthesis; UDP-N-acetyl-alpha-D-glucosamine biosynthesis; N-acetyl-alpha-D-glucosamine 1-phosphate from alpha-D-glucosamine 6-phosphate (route II): step 2/2. The protein operates within nucleotide-sugar biosynthesis; UDP-N-acetyl-alpha-D-glucosamine biosynthesis; UDP-N-acetyl-alpha-D-glucosamine from N-acetyl-alpha-D-glucosamine 1-phosphate: step 1/1. Its pathway is bacterial outer membrane biogenesis; LPS lipid A biosynthesis. Functionally, catalyzes the last two sequential reactions in the de novo biosynthetic pathway for UDP-N-acetylglucosamine (UDP-GlcNAc). The C-terminal domain catalyzes the transfer of acetyl group from acetyl coenzyme A to glucosamine-1-phosphate (GlcN-1-P) to produce N-acetylglucosamine-1-phosphate (GlcNAc-1-P), which is converted into UDP-GlcNAc by the transfer of uridine 5-monophosphate (from uridine 5-triphosphate), a reaction catalyzed by the N-terminal domain. This chain is Bifunctional protein GlmU, found in Legionella pneumophila (strain Lens).